Consider the following 329-residue polypeptide: o-succinylbenzoate synthase (329 aa).

The active-site Proton donor is Lys140. Mg(2+) contacts are provided by Asp168, Glu197, and Asp220. Lys242 (proton acceptor) is an active-site residue.

Belongs to the mandelate racemase/muconate lactonizing enzyme family. MenC type 1 subfamily. A divalent metal cation is required as a cofactor.

The enzyme catalyses (1R,6R)-6-hydroxy-2-succinyl-cyclohexa-2,4-diene-1-carboxylate = 2-succinylbenzoate + H2O. It functions in the pathway quinol/quinone metabolism; 1,4-dihydroxy-2-naphthoate biosynthesis; 1,4-dihydroxy-2-naphthoate from chorismate: step 4/7. It participates in quinol/quinone metabolism; menaquinone biosynthesis. Its function is as follows. Converts 2-succinyl-6-hydroxy-2,4-cyclohexadiene-1-carboxylate (SHCHC) to 2-succinylbenzoate (OSB). In Haemophilus influenzae (strain ATCC 51907 / DSM 11121 / KW20 / Rd), this protein is o-succinylbenzoate synthase.